The sequence spans 340 residues: Holliday junction branch migration complex subunit RuvB (340 aa).

Residues 1-183 are large ATPase domain (RuvB-L); it reads MKRDDLVSPE…FGISFRLDYY (183 aa). Residues Leu22, Arg23, Gly64, Lys67, Thr68, Thr69, 130-132, Arg173, Tyr183, and Arg220 each bind ATP; that span reads EDF. Thr68 lines the Mg(2+) pocket. Residues 184 to 254 are small ATPAse domain (RuvB-S); sequence AVEELTKIIN…VAVHALEMLE (71 aa). The segment at 257-340 is head domain (RuvB-H); the sequence is DRGFDQMDRS…KFEVGQKELF (84 aa). Lys312 and Arg317 together coordinate DNA.

It belongs to the RuvB family. Homohexamer. Forms an RuvA(8)-RuvB(12)-Holliday junction (HJ) complex. HJ DNA is sandwiched between 2 RuvA tetramers; dsDNA enters through RuvA and exits via RuvB. An RuvB hexamer assembles on each DNA strand where it exits the tetramer. Each RuvB hexamer is contacted by two RuvA subunits (via domain III) on 2 adjacent RuvB subunits; this complex drives branch migration. In the full resolvosome a probable DNA-RuvA(4)-RuvB(12)-RuvC(2) complex forms which resolves the HJ.

The protein localises to the cytoplasm. The enzyme catalyses ATP + H2O = ADP + phosphate + H(+). Functionally, the RuvA-RuvB-RuvC complex processes Holliday junction (HJ) DNA during genetic recombination and DNA repair, while the RuvA-RuvB complex plays an important role in the rescue of blocked DNA replication forks via replication fork reversal (RFR). RuvA specifically binds to HJ cruciform DNA, conferring on it an open structure. The RuvB hexamer acts as an ATP-dependent pump, pulling dsDNA into and through the RuvAB complex. RuvB forms 2 homohexamers on either side of HJ DNA bound by 1 or 2 RuvA tetramers; 4 subunits per hexamer contact DNA at a time. Coordinated motions by a converter formed by DNA-disengaged RuvB subunits stimulates ATP hydrolysis and nucleotide exchange. Immobilization of the converter enables RuvB to convert the ATP-contained energy into a lever motion, pulling 2 nucleotides of DNA out of the RuvA tetramer per ATP hydrolyzed, thus driving DNA branch migration. The RuvB motors rotate together with the DNA substrate, which together with the progressing nucleotide cycle form the mechanistic basis for DNA recombination by continuous HJ branch migration. Branch migration allows RuvC to scan DNA until it finds its consensus sequence, where it cleaves and resolves cruciform DNA. This is Holliday junction branch migration complex subunit RuvB from Syntrophus aciditrophicus (strain SB).